The sequence spans 378 residues: Myoglobin (378 aa).

His332 is a binding site for heme.

Belongs to the indoleamine 2,3-dioxygenase family. Homodimer. Heme is required as a cofactor.

Functionally, serves a reserve supply of oxygen and facilitates the movement of oxygen within muscles. This is Myoglobin from Haliotis madaka (Giant abalone).